Consider the following 158-residue polypeptide: MADEALFLLLHNEMVSGVYKSAEQGEVENGRCITKLENMGFRVGQGLIERFTKDTARFKDELDIMKFICKDFWTTVFKKQIDNLRTNHQGIYVLQDNKFRLLTQMSAGKQYLEHASKYLAFTCGLIRGGLSNLGIKSIVTAEVSSMPACKFQVMIQKL.

Belongs to the TRAPP small subunits family. BET3 subfamily. Homodimer. Part of a TRAPP complex. Heterodimer with TRAPPC3. The heterodimer TRAPPC6B-TRAPPC3 interacts with TRAPPC1 likely providing a core for TRAPP complex formation.

It localises to the golgi apparatus. The protein resides in the cis-Golgi network. Its subcellular location is the endoplasmic reticulum. Functionally, component of a transport protein particle (TRAPP) complex that may function in specific stages of inter-organelle traffic. Specifically involved in the early development of neural circuitry, likely by controlling the frequency and amplitude of intracellular calcium transients implicated in the regulation of neuron differentiation and survival. In Bos taurus (Bovine), this protein is Trafficking protein particle complex subunit 6B.